We begin with the raw amino-acid sequence, 194 residues long: Peptidyl-tRNA hydrolase (194 aa).

Tyrosine 16 is a tRNA binding site. Histidine 21 (proton acceptor) is an active-site residue. Phenylalanine 67, asparagine 69, and asparagine 115 together coordinate tRNA.

This sequence belongs to the PTH family. Monomer.

It localises to the cytoplasm. It carries out the reaction an N-acyl-L-alpha-aminoacyl-tRNA + H2O = an N-acyl-L-amino acid + a tRNA + H(+). In terms of biological role, hydrolyzes ribosome-free peptidyl-tRNAs (with 1 or more amino acids incorporated), which drop off the ribosome during protein synthesis, or as a result of ribosome stalling. Its function is as follows. Catalyzes the release of premature peptidyl moieties from peptidyl-tRNA molecules trapped in stalled 50S ribosomal subunits, and thus maintains levels of free tRNAs and 50S ribosomes. This Escherichia coli O81 (strain ED1a) protein is Peptidyl-tRNA hydrolase.